Consider the following 195-residue polypeptide: MSQFKTGSRADCIGPARGSNFGPMSHSAVPATEVVIAADCWRSEASAEATVLRAIEAAAAMVDADTGEAELAVMLTDDDGIRALNASYRGQDKPTNVLSFPAPQPDYQGAAQGSDVAPKLLGDIAIAYQTVRREADDEGKRFDHHLSHLAVHGFLHLVGYDHETDAEAETMEAAERRILAGLGIPDPYADQDRVS.

Zn(2+) contacts are provided by histidine 152, histidine 156, and histidine 162.

This sequence belongs to the endoribonuclease YbeY family. Zn(2+) is required as a cofactor.

The protein resides in the cytoplasm. Single strand-specific metallo-endoribonuclease involved in late-stage 70S ribosome quality control and in maturation of the 3' terminus of the 16S rRNA. In Rhodopseudomonas palustris (strain HaA2), this protein is Endoribonuclease YbeY.